Reading from the N-terminus, the 1140-residue chain is uncharacterized protein (1140 aa).

2 consecutive transmembrane segments (helical) span residues phenylalanine 8 to threonine 28 and isoleucine 1098 to valine 1118.

It to M.pneumoniae MPN_375 (in the N-terminal section), M.pneumoniae MPN_374 (in the central section) and M.pneumoniae MPN_373 (in the C-terminal section).

The protein resides in the cell membrane. This is an uncharacterized protein from Mycoplasma pneumoniae (strain ATCC 29342 / M129 / Subtype 1) (Mycoplasmoides pneumoniae).